The primary structure comprises 229 residues: Probable calcium-binding protein CML22 (229 aa).

EF-hand domains lie at 53–88 (EGLRNIRSVFESYDNDTNGTIDIEELKKCLEELKLS), 89–124 (LSDEEVKGLYSWCDVDGSKGIQFNEFIVLLCLIYLL), 145–180 (SIFDPIVEVFLFLDKDGKGKLNKADVIKTLNNEDYP), and 184–219 (SPSHVTNMRFEEMDWGRKGKVGFREFLFAFMSWVGL). Positions 66, 68, 70, 72, and 77 each coordinate Ca(2+).

In terms of biological role, potential calcium sensor. The sequence is that of Probable calcium-binding protein CML22 (CML22) from Arabidopsis thaliana (Mouse-ear cress).